Consider the following 248-residue polypeptide: Trypsin I-P38 (248 aa).

The signal sequence occupies residues 1 to 15 (MKFLVLVAFLGVAVA). Residues 16–25 (FPISDEDDDK) constitute a propeptide, activation peptide. The 221-residue stretch at 26-246 (IVGGYSCARS…YVSWIKTTMS (221 aa)) folds into the Peptidase S1 domain. 6 cysteine pairs are disulfide-bonded: Cys32–Cys162, Cys50–Cys66, Cys134–Cys235, Cys141–Cys208, Cys173–Cys187, and Cys198–Cys222. Residue His65 is the Charge relay system of the active site. Ca(2+) contacts are provided by Glu77, Asn79, and Glu87. Residue Asp109 is the Charge relay system of the active site. Residue Ser202 is the Charge relay system of the active site.

The protein belongs to the peptidase S1 family. It depends on Ca(2+) as a cofactor. High levels are seen in the pancreas while lower levels are found in the liver, spleen and thymus.

The protein resides in the secreted. It is found in the extracellular space. It carries out the reaction Preferential cleavage: Arg-|-Xaa, Lys-|-Xaa.. The sequence is that of Trypsin I-P38 from Gallus gallus (Chicken).